The sequence spans 445 residues: Arginine/agmatine antiporter (445 aa).

Residues 1–12 are Cytoplasmic-facing; the sequence is MSSDADAHKVGL. Residues 13–24 form a helical membrane-spanning segment; it reads IPVTLMVSGNIM. 3 residues coordinate L-arginine: Ile23, Ser26, and Gly27. Residues 25–27 carry the Helix-breaking GSG motif TM1 motif; it reads GSG. Over 25-42 the chain is Periplasmic; that stretch reads GSGVFLLPANLASTGGIA. Residues 43–61 traverse the membrane as a helical segment; sequence IYGWLVTIIGALGLSMVYA. Over 62-86 the chain is Cytoplasmic; sequence KMSFLDPSPGGSYAYARRCFGPFLG. The helical transmembrane segment at 87–112 threads the bilayer; the sequence is YQTNVLYWLACWIGNIAMVVIGVGYL. Residues Ala96, Cys97, and Asn101 each contribute to the L-arginine site. The Periplasmic portion of the chain corresponds to 113–124; it reads SYFFPILKDPLV. A helical transmembrane segment spans residues 125 to 142; that stretch reads LTITCVVVLWIFVLLNIV. A topological domain (cytoplasmic) is located at residue Gly143. The chain crosses the membrane as a helical span at residues 144–171; the sequence is PKMITRVQAVATVLALIPIVGIAVFGWF. At 172 to 194 the chain is on the periplasmic side; sequence WFRGETYMAAWNVSGLGTFGAIQ. Residues 195 to 207 form a helical membrane-spanning segment; it reads STLNVTLWSFIGV. The L-arginine site is built by Trp202 and Ile205. Residues 206-210 carry the Helix-breaking GVESA motif TM6 motif; it reads GVESA. Residues 208 to 226 lie on the Cytoplasmic side of the membrane; the sequence is ESASVAAGVVKNPKRNVPI. A helical membrane pass occupies residues 227 to 247; that stretch reads ATIGGVLIAAVCYVLSTTAIM. Residues 248–277 lie on the Periplasmic side of the membrane; the sequence is GMIPNAALRVSASPFGDAARMALGDTAGAI. The helical transmembrane segment at 278-301 threads the bilayer; the sequence is VSFCAAAGCLGSLGGWTLLAGQTA. Trp293 is an L-arginine binding site. Topologically, residues 302–323 are cytoplasmic; that stretch reads KAAADDGLFPPIFARVNKAGTP. The helical transmembrane segment at 324–340 threads the bilayer; that stretch reads VAGLIIVGILMTIFQLS. Over 341–352 the chain is Periplasmic; that stretch reads SISPNATKEFGL. The chain crosses the membrane as a helical span at residues 353–370; it reads VSSVSVIFTLVPYLYTCA. Ser357 is a binding site for L-arginine. The Cytoplasmic portion of the chain corresponds to 371–388; the sequence is ALLLLGHGHFGKARPAYL. The chain crosses the membrane as a helical span at residues 389–404; that stretch reads AVTTIAFLYCIWAVVG. Over 405 to 407 the chain is Periplasmic; it reads SGA. A helical transmembrane segment spans residues 408 to 426; the sequence is KEVMWSFVTLMVITAMYAL. The Cytoplasmic portion of the chain corresponds to 427–445; it reads NYNRLHKNPYPLDAPISKD.

This sequence belongs to the amino acid-polyamine-organocation (APC) superfamily. Basic amino acid/polyamine antiporter (APA) (TC 2.A.3.2) family. As to quaternary structure, homodimer;each subunit has its own individual transport capacity.

It localises to the cell inner membrane. It catalyses the reaction agmatine(in) + L-arginine(out) = agmatine(out) + L-arginine(in). Major component of the acid-resistance (AR) system allowing enteric pathogens to survive the acidic environment in the stomach. Exchanges extracellular arginine for its intracellular decarboxylation product agmatine (Agm) thereby expelling intracellular protons. Probably undergoes several conformational states in order to translocate the substrate across the membrane; keeps the substrate accessible to only 1 side of the membrane at a time by opening and closing 3 membrane-internal gates. In Escherichia coli O157:H7, this protein is Arginine/agmatine antiporter (adiC).